The chain runs to 199 residues: WASH complex subunit 3 (199 aa).

Positions 47 to 76 (VCEEKLSALSLRIQQIETTLNILEAKLSSI) form a coiled coil. Polar residues predominate over residues 93 to 120 (NISNGHLPSQPDAQSVVVSPQSDNNSMN). 2 disordered regions span residues 93 to 136 (NISN…NITT) and 170 to 199 (PDLL…SFSD). The segment covering 183-192 (GEPEAEESSD) has biased composition (acidic residues).

The protein belongs to the CCDC53 family. In terms of assembly, component of the WASH complex.

The chain is WASH complex subunit 3 from Xenopus laevis (African clawed frog).